A 159-amino-acid polypeptide reads, in one-letter code: Pathogenesis-related leaf protein 4 (159 aa).

The signal sequence occupies residues 1–24 (MGLFNISLLLTCLMVLAIFHSCEA). Glutamine 25 carries the post-translational modification Pyrrolidone carboxylic acid. In terms of domain architecture, SCP spans 32–147 (LAVHNDARAQ…NGWWFISCNY (116 aa)). Cystine bridges form between cysteine 68–cysteine 136, cysteine 109–cysteine 115, and cysteine 131–cysteine 145.

It belongs to the CRISP family.

Its function is as follows. Probably involved in the defense reaction of plants against pathogens. This chain is Pathogenesis-related leaf protein 4, found in Solanum lycopersicum (Tomato).